The following is a 256-amino-acid chain: Alcohol dehydrogenase (256 aa).

12–35 contributes to the NAD(+) binding site; the sequence is FVAGLGGIGLDTSKELVKRDLKNL. Ser140 serves as a coordination point for substrate. Tyr153 serves as the catalytic Proton acceptor.

The protein belongs to the short-chain dehydrogenases/reductases (SDR) family. In terms of assembly, homodimer.

The enzyme catalyses a primary alcohol + NAD(+) = an aldehyde + NADH + H(+). It catalyses the reaction a secondary alcohol + NAD(+) = a ketone + NADH + H(+). This chain is Alcohol dehydrogenase (Adh), found in Drosophila teissieri (Fruit fly).